Consider the following 285-residue polypeptide: tRNA (guanine-N(7)-)-methyltransferase (285 aa).

S-adenosyl-L-methionine is bound by residues G102, E125–I126, N160–A161, and C180. Residue D183 is part of the active site. T258–E260 is a binding site for S-adenosyl-L-methionine.

Belongs to the class I-like SAM-binding methyltransferase superfamily. TrmB family. In terms of assembly, forms a complex with TRM82.

The protein resides in the nucleus. The enzyme catalyses guanosine(46) in tRNA + S-adenosyl-L-methionine = N(7)-methylguanosine(46) in tRNA + S-adenosyl-L-homocysteine. It participates in tRNA modification; N(7)-methylguanine-tRNA biosynthesis. Catalyzes the formation of N(7)-methylguanine at position 46 (m7G46) in tRNA. This is tRNA (guanine-N(7)-)-methyltransferase from Candida glabrata (strain ATCC 2001 / BCRC 20586 / JCM 3761 / NBRC 0622 / NRRL Y-65 / CBS 138) (Yeast).